Reading from the N-terminus, the 365-residue chain is 3-isopropylmalate dehydrogenase (365 aa).

80–91 (GPKWGTGEVRPE) contacts NAD(+). Residues Arg98, Arg108, Arg137, and Asp226 each coordinate substrate. 3 residues coordinate Mg(2+): Asp226, Asp251, and Asp255. An NAD(+)-binding site is contributed by 290–301 (GSAPDLPKNKVN).

It belongs to the isocitrate and isopropylmalate dehydrogenases family. Homodimer. Requires Mg(2+) as cofactor. Mn(2+) is required as a cofactor.

It is found in the cytoplasm. The enzyme catalyses (2R,3S)-3-isopropylmalate + NAD(+) = 4-methyl-2-oxopentanoate + CO2 + NADH. It participates in amino-acid biosynthesis; L-leucine biosynthesis; L-leucine from 3-methyl-2-oxobutanoate: step 3/4. Functionally, catalyzes the oxidation of 3-carboxy-2-hydroxy-4-methylpentanoate (3-isopropylmalate) to 3-carboxy-4-methyl-2-oxopentanoate. The product decarboxylates to 4-methyl-2 oxopentanoate. In Candida boidinii (Yeast), this protein is 3-isopropylmalate dehydrogenase (LEU2).